The sequence spans 512 residues: Serine/threonine-protein kinase BSK1 (512 aa).

G2 is lipidated: N-myristoyl glycine. Residues 8-48 form a disordered region; the sequence is FSGDNPLGKDGVQPQPLSQNNHGGATTADNGGSGGASGVGG. Residues 38–48 are compositionally biased toward gly residues; the sequence is GGSGGASGVGG. In terms of domain architecture, Protein kinase spans 76 to 331; it reads DNIVSESGEK…DLVATLAPLQ (256 aa). Residues 82–90 and K104 contribute to the ATP site; that span reads SGEKAPNLV. D198 serves as the catalytic Proton acceptor. Position 230 is a phosphoserine (S230). A coiled-coil region spans residues 483-508; it reads AKLNMNTDAADMLNEAAQLEEKRQRG.

It belongs to the protein kinase superfamily. Ser/Thr protein kinase family. In terms of assembly, interacts with BRI1. Interacts with ASK7/BIN2, BSK5, BSK6, BSK8 and BSK11. Interacts with FLS2. In terms of processing, phosphorylated at Ser-230 by BRI1 upon brassinolide (BL) treatment. Phosphorylation at Ser-230 weakens the interaction between BSK1 and BRI1. Phosphorylated by ASK7/BIN2 and ASK9/BIL2.

The protein localises to the cell membrane. It carries out the reaction L-seryl-[protein] + ATP = O-phospho-L-seryl-[protein] + ADP + H(+). The enzyme catalyses L-threonyl-[protein] + ATP = O-phospho-L-threonyl-[protein] + ADP + H(+). Functionally, serine/threonine kinase that acts as a positive regulator of brassinosteroid (BR) signaling downstream of the receptor kinase BRI1. Mediates signal transduction from BRI1 by functioning as substrate of BRI1. Functions as a positive regulator of plant immunity. May be involved in the regulation of pattern-triggered immunity (PTI) downstream of the flagellin receptor FLS2. Possesses kinase activity in vitro. Kinase activity is required for its function in innate immunity. This is Serine/threonine-protein kinase BSK1 from Arabidopsis thaliana (Mouse-ear cress).